The chain runs to 264 residues: Thymidylate synthase 2 (264 aa).

Position 21 (Arg-21) interacts with dUMP. His-51 is a (6R)-5,10-methylene-5,6,7,8-tetrahydrofolate binding site. Residue 126–127 (RR) participates in dUMP binding. Cys-146 serves as the catalytic Nucleophile. Residues 166–169 (RSAD), Asn-177, and 207–209 (HIY) each bind dUMP. Residue Asp-169 coordinates (6R)-5,10-methylene-5,6,7,8-tetrahydrofolate. A (6R)-5,10-methylene-5,6,7,8-tetrahydrofolate-binding site is contributed by Ser-263.

The protein belongs to the thymidylate synthase family. Bacterial-type ThyA subfamily. In terms of assembly, homodimer.

It localises to the cytoplasm. The enzyme catalyses dUMP + (6R)-5,10-methylene-5,6,7,8-tetrahydrofolate = 7,8-dihydrofolate + dTMP. The protein operates within pyrimidine metabolism; dTTP biosynthesis. Catalyzes the reductive methylation of 2'-deoxyuridine-5'-monophosphate (dUMP) to 2'-deoxythymidine-5'-monophosphate (dTMP) while utilizing 5,10-methylenetetrahydrofolate (mTHF) as the methyl donor and reductant in the reaction, yielding dihydrofolate (DHF) as a by-product. This enzymatic reaction provides an intracellular de novo source of dTMP, an essential precursor for DNA biosynthesis. This chain is Thymidylate synthase 2, found in Bacillus spizizenii (strain ATCC 23059 / NRRL B-14472 / W23) (Bacillus subtilis subsp. spizizenii).